The sequence spans 177 residues: ATP synthase subunit b (177 aa).

Residues 19–39 traverse the membrane as a helical segment; the sequence is LFPNLPNFIAHVIATIVLVVI.

The protein belongs to the ATPase B chain family. As to quaternary structure, F-type ATPases have 2 components, F(1) - the catalytic core - and F(0) - the membrane proton channel. F(1) has five subunits: alpha(3), beta(3), gamma(1), delta(1), epsilon(1). F(0) has three main subunits: a(1), b(2) and c(10-14). The alpha and beta chains form an alternating ring which encloses part of the gamma chain. F(1) is attached to F(0) by a central stalk formed by the gamma and epsilon chains, while a peripheral stalk is formed by the delta and b chains.

It localises to the cell membrane. F(1)F(0) ATP synthase produces ATP from ADP in the presence of a proton or sodium gradient. F-type ATPases consist of two structural domains, F(1) containing the extramembraneous catalytic core and F(0) containing the membrane proton channel, linked together by a central stalk and a peripheral stalk. During catalysis, ATP synthesis in the catalytic domain of F(1) is coupled via a rotary mechanism of the central stalk subunits to proton translocation. In terms of biological role, component of the F(0) channel, it forms part of the peripheral stalk, linking F(1) to F(0). This Mesoplasma florum (strain ATCC 33453 / NBRC 100688 / NCTC 11704 / L1) (Acholeplasma florum) protein is ATP synthase subunit b.